The primary structure comprises 378 residues: UPF0754 membrane protein BCE33L0760 (378 aa).

2 consecutive transmembrane segments (helical) span residues M1–T21 and Y357–L377.

It belongs to the UPF0754 family.

The protein resides in the cell membrane. In Bacillus cereus (strain ZK / E33L), this protein is UPF0754 membrane protein BCE33L0760.